The primary structure comprises 607 residues: Chaperone protein dnaK (607 aa).

Residues 579 to 591 (KASETSNAKTNGK) show a composition bias toward polar residues. The disordered stretch occupies residues 579–607 (KASETSNAKTNGKASEKEDVIDADFKAQE). The span at 592–607 (ASEKEDVIDADFKAQE) shows a compositional bias: basic and acidic residues.

The protein belongs to the heat shock protein 70 family.

It localises to the plastid. It is found in the chloroplast. Acts as a chaperone. This Cyanidioschyzon merolae (strain NIES-3377 / 10D) (Unicellular red alga) protein is Chaperone protein dnaK.